The following is a 145-amino-acid chain: Large ribosomal subunit protein bL19 (145 aa).

This sequence belongs to the bacterial ribosomal protein bL19 family.

Its function is as follows. This protein is located at the 30S-50S ribosomal subunit interface and may play a role in the structure and function of the aminoacyl-tRNA binding site. The chain is Large ribosomal subunit protein bL19 from Brachyspira hyodysenteriae (strain ATCC 49526 / WA1).